A 393-amino-acid polypeptide reads, in one-letter code: Zinc finger CCCH domain-containing protein 2 (393 aa).

The interval 1 to 71 is disordered; sequence MDVVCTEHQM…NRENKEYCYD (71 aa). Positions 20-37 are enriched in low complexity; that stretch reads RKLLLSSKSFPSDSSSPR. Residues 60–69 show a composition bias toward basic and acidic residues; the sequence is DNNRENKEYC. 2 C3H1-type zinc fingers span residues 122–150 and 159–181; these read QYSG…HGVF and YRTE…AHSP.

Interacts with MARD1/FLZ9 and RD21A. Specifically expressed in seeds.

It localises to the nucleus. Probable transcription repressor that functions as a negative regulator of phytochrome-mediated promotion of seed germination. Inhibits seed germination by regulating the expression of gibberellic acid (GA) and abscisic acid (ABA) metabolic genes. Does not regulate the expression of the DELLA genes RGA and RGA1. Activated by PIL5, a phytochrome-interacting basic helix-loop-helix transcription factor. Represses directly JMJ20 and JMJ22 expression in the absence of red light (R) and in far-red (FR) conditions. This Arabidopsis thaliana (Mouse-ear cress) protein is Zinc finger CCCH domain-containing protein 2.